The chain runs to 195 residues: A-type ATP synthase subunit E (195 aa).

This sequence belongs to the V-ATPase E subunit family. As to quaternary structure, has multiple subunits with at least A(3), B(3), C, D, E, F, H, I and proteolipid K(x).

It localises to the cell membrane. Its function is as follows. Component of the A-type ATP synthase that produces ATP from ADP in the presence of a proton gradient across the membrane. The sequence is that of A-type ATP synthase subunit E from Staphylothermus marinus (strain ATCC 43588 / DSM 3639 / JCM 9404 / F1).